A 218-amino-acid polypeptide reads, in one-letter code: Glutathione S-transferase Mu 4 (218 aa).

One can recognise a GST N-terminal domain in the interval 1 to 88 (MPMTLGYWDI…YIARKHNLCG (88 aa)). Glutathione is bound by residues 7–8 (YW), 46–50 (WLSEK), 59–60 (NL), and 72–73 (QS). The GST C-terminal domain maps to 90–208 (TEEEKIRVDI…KTSRFLRTPL (119 aa)). Position 116 (Tyr116) interacts with substrate.

The protein belongs to the GST superfamily. Mu family. As to quaternary structure, homodimer. As to expression, widely expressed.

It is found in the cytoplasm. The catalysed reaction is RX + glutathione = an S-substituted glutathione + a halide anion + H(+). It catalyses the reaction 1-chloro-2,4-dinitrobenzene + glutathione = 2,4-dinitrophenyl-S-glutathione + chloride + H(+). The enzyme catalyses (13S,14S)-epoxy-(4Z,7Z,9E,11E,16Z,19Z)-docosahexaenoate + glutathione = (13R)-S-glutathionyl-(14S)-hydroxy-(4Z,7Z,9E,11E,16Z,19Z)-docosahexaenoate. It carries out the reaction leukotriene C4 = leukotriene A4 + glutathione. In terms of biological role, conjugation of reduced glutathione to a wide number of exogenous and endogenous hydrophobic electrophiles. Catalyzes the conjugation of leukotriene A4 with reduced glutathione (GSH) to form leukotriene C4. Can also catalyze the transfer of a glutathionyl group from glutathione (GSH) to 13(S),14(S)-epoxy-docosahexaenoic acid to form maresin conjugate in tissue regeneration 1 (MCTR1), a bioactive lipid mediator that possess potent anti-inflammatory and proresolving actions. This chain is Glutathione S-transferase Mu 4, found in Mus musculus (Mouse).